The sequence spans 364 residues: DNA polymerase IV (364 aa).

Residues 14–198 enclose the UmuC domain; the sequence is IIHIDMDAFF…LPIEKFHGVG (185 aa). Mg(2+) contacts are provided by aspartate 18 and aspartate 116. Residue glutamate 117 is part of the active site.

The protein belongs to the DNA polymerase type-Y family. As to quaternary structure, monomer. It depends on Mg(2+) as a cofactor.

The protein resides in the cytoplasm. It carries out the reaction DNA(n) + a 2'-deoxyribonucleoside 5'-triphosphate = DNA(n+1) + diphosphate. Poorly processive, error-prone DNA polymerase involved in untargeted mutagenesis. Copies undamaged DNA at stalled replication forks, which arise in vivo from mismatched or misaligned primer ends. These misaligned primers can be extended by PolIV. Exhibits no 3'-5' exonuclease (proofreading) activity. May be involved in translesional synthesis, in conjunction with the beta clamp from PolIII. The polypeptide is DNA polymerase IV (Streptococcus pyogenes serotype M18 (strain MGAS8232)).